A 138-amino-acid chain; its full sequence is Sec-independent protein translocase protein TatB (138 aa).

A helical transmembrane segment spans residues serine 2 to glycine 18. A disordered region spans residues asparagine 109–valine 138. Residues threonine 118 to valine 138 show a composition bias toward basic and acidic residues.

The protein belongs to the TatB family. As to quaternary structure, the Tat system comprises two distinct complexes: a TatABC complex, containing multiple copies of TatA, TatB and TatC subunits, and a separate TatA complex, containing only TatA subunits. Substrates initially bind to the TatABC complex, which probably triggers association of the separate TatA complex to form the active translocon.

It is found in the cell inner membrane. In terms of biological role, part of the twin-arginine translocation (Tat) system that transports large folded proteins containing a characteristic twin-arginine motif in their signal peptide across membranes. Together with TatC, TatB is part of a receptor directly interacting with Tat signal peptides. TatB may form an oligomeric binding site that transiently accommodates folded Tat precursor proteins before their translocation. This Campylobacter jejuni subsp. jejuni serotype O:2 (strain ATCC 700819 / NCTC 11168) protein is Sec-independent protein translocase protein TatB.